A 366-amino-acid polypeptide reads, in one-letter code: Protein disulfide isomerase-like 2-1 (366 aa).

An N-terminal signal peptide occupies residues 1–29 (MATPQISRKALASLLLLVAAAAAVSTASA). 2 Thioredoxin domains span residues 30-138 (DDVL…SEAA) and 139-257 (TNVK…EKCG). Residues C59, C62, C178, and C181 each act as nucleophile in the active site. Cystine bridges form between C59–C62 and C178–C181.

It belongs to the protein disulfide isomerase family.

The protein localises to the secreted. The catalysed reaction is Catalyzes the rearrangement of -S-S- bonds in proteins.. Functionally, acts as a protein-folding catalyst that interacts with nascent polypeptides to catalyze the formation, isomerization, and reduction or oxidation of disulfide bonds. May play a role in storage protein biogenesis. The protein is Protein disulfide isomerase-like 2-1 (PDIL2-1) of Oryza sativa subsp. japonica (Rice).